Here is a 278-residue protein sequence, read N- to C-terminus: Urease accessory protein UreD (278 aa).

Belongs to the UreD family. In terms of assembly, ureD, UreF and UreG form a complex that acts as a GTP-hydrolysis-dependent molecular chaperone, activating the urease apoprotein by helping to assemble the nickel containing metallocenter of UreC. The UreE protein probably delivers the nickel.

The protein localises to the cytoplasm. Functionally, required for maturation of urease via the functional incorporation of the urease nickel metallocenter. The sequence is that of Urease accessory protein UreD from Deinococcus radiodurans (strain ATCC 13939 / DSM 20539 / JCM 16871 / CCUG 27074 / LMG 4051 / NBRC 15346 / NCIMB 9279 / VKM B-1422 / R1).